We begin with the raw amino-acid sequence, 183 residues long: UPF0200 protein MmarC7_0527 (183 aa).

8–15 (GMPGSGKS) contributes to the ATP binding site.

It belongs to the UPF0200 family.

This Methanococcus maripaludis (strain C7 / ATCC BAA-1331) protein is UPF0200 protein MmarC7_0527.